A 177-amino-acid polypeptide reads, in one-letter code: R-phycoerythrin beta chain (177 aa).

2 residues coordinate (2R,3E)-phycoerythrobilin: asparagine 35 and aspartate 39. Residues cysteine 50, aspartate 54, and cysteine 61 each coordinate phycourobilin. Residues asparagine 72, 77–78 (RR), cysteine 82, and 84–85 (RD) contribute to the (2R,3E)-phycoerythrobilin site. Asparagine 72 carries the post-translational modification N4-methylasparagine. 147 to 148 (SG) provides a ligand contact to phycourobilin. Residue cysteine 158 coordinates (2R,3E)-phycoerythrobilin.

Belongs to the phycobiliprotein family. Heterododecamer of 6 alpha and 6 beta chains. The basic functional unit of phycobiliproteins is a ring-shaped hexamer formed from two back-to-back trimers contacting via the alpha chain subunits. The trimers are composed of alpha/beta subunit heterodimers arranged around a three-fold axis of symmetry. The phycoerythrins also contain a gamma subunit which is located in the center of the hexamer. Contains two covalently linked phycoerythrobilin chromophores and one covalently linked phycourobilin chromophore.

Its subcellular location is the plastid. It localises to the chloroplast thylakoid membrane. In terms of biological role, light-harvesting photosynthetic tetrapyrrole chromophore-protein from the phycobiliprotein complex. The polypeptide is R-phycoerythrin beta chain (cpeB) (Griffithsia monilis (Red alga)).